Here is a 264-residue protein sequence, read N- to C-terminus: MKKLKLHGFNNLTKSLSFCIYDICYAKTAEERDGYIAYIDELYNANRLTEILTETCSIIGANILNIARQDYEPQGASVTILVSEEPVDPKLIDQTEHPGPLPETVVAHLDKSHICVHTYPESHPEGGLCTFRADIEVSTCGVISPLKALNYLIHQLESDIVTIDYRVRGFTRDINGMKHFIDHEINSIQNFMSDDIKSLYDMVDVNVYQENIFHTKMLLKEFDLKHYMFHTRPEELTAEERKVITDLLWKEMREIYYGRNIPAV.

The active-site Schiff-base intermediate with substrate; via pyruvic acid is S112. Position 112 is a pyruvic acid (Ser); by autocatalysis (S112). The Proton acceptor; for processing activity role is filled by H117. C140 (proton donor; for catalytic activity) is an active-site residue.

The protein belongs to the prokaryotic AdoMetDC family. Type 2 subfamily. As to quaternary structure, heterooctamer of four alpha and four beta chains arranged as a tetramer of alpha/beta heterodimers. Requires pyruvate as cofactor. Is synthesized initially as an inactive proenzyme. Formation of the active enzyme involves a self-maturation process in which the active site pyruvoyl group is generated from an internal serine residue via an autocatalytic post-translational modification. Two non-identical subunits are generated from the proenzyme in this reaction, and the pyruvate is formed at the N-terminus of the alpha chain, which is derived from the carboxyl end of the proenzyme. The post-translation cleavage follows an unusual pathway, termed non-hydrolytic serinolysis, in which the side chain hydroxyl group of the serine supplies its oxygen atom to form the C-terminus of the beta chain, while the remainder of the serine residue undergoes an oxidative deamination to produce ammonia and the pyruvoyl group blocking the N-terminus of the alpha chain.

The catalysed reaction is S-adenosyl-L-methionine + H(+) = S-adenosyl 3-(methylsulfanyl)propylamine + CO2. Its pathway is amine and polyamine biosynthesis; S-adenosylmethioninamine biosynthesis; S-adenosylmethioninamine from S-adenosyl-L-methionine: step 1/1. In terms of biological role, catalyzes the decarboxylation of S-adenosylmethionine to S-adenosylmethioninamine (dcAdoMet), the propylamine donor required for the synthesis of the polyamines spermine and spermidine from the diamine putrescine. In Klebsiella pneumoniae (strain 342), this protein is S-adenosylmethionine decarboxylase proenzyme.